Consider the following 458-residue polypeptide: D-inositol 3-phosphate glycosyltransferase (458 aa).

Histidine 16 contributes to the 1D-myo-inositol 3-phosphate binding site. Residues 22 to 23 (QP) and glycine 30 each bind UDP-N-acetyl-alpha-D-glucosamine. 1D-myo-inositol 3-phosphate contacts are provided by residues 27–32 (DAGGMN), lysine 85, tyrosine 118, threonine 142, and arginine 162. Positions 236, 241, and 302 each coordinate UDP-N-acetyl-alpha-D-glucosamine. Tyrosine 311, arginine 312, and serine 314 together coordinate Mg(2+). UDP-N-acetyl-alpha-D-glucosamine is bound by residues glutamate 324 and glutamate 332. Threonine 338 is a Mg(2+) binding site. A disordered region spans residues 428–458 (VAAQNVTGSSSRTRRPWRRRRSTLLPMTGRS). A compositionally biased stretch (basic residues) spans 439-449 (RTRRPWRRRRS).

Belongs to the glycosyltransferase group 1 family. MshA subfamily. In terms of assembly, homodimer.

The catalysed reaction is 1D-myo-inositol 3-phosphate + UDP-N-acetyl-alpha-D-glucosamine = 1D-myo-inositol 2-acetamido-2-deoxy-alpha-D-glucopyranoside 3-phosphate + UDP + H(+). Functionally, catalyzes the transfer of a N-acetyl-glucosamine moiety to 1D-myo-inositol 3-phosphate to produce 1D-myo-inositol 2-acetamido-2-deoxy-glucopyranoside 3-phosphate in the mycothiol biosynthesis pathway. In Gordonia bronchialis (strain ATCC 25592 / DSM 43247 / BCRC 13721 / JCM 3198 / KCTC 3076 / NBRC 16047 / NCTC 10667) (Rhodococcus bronchialis), this protein is D-inositol 3-phosphate glycosyltransferase.